A 539-amino-acid chain; its full sequence is Dihydrolipoyllysine-residue acetyltransferase component 2 of pyruvate dehydrogenase complex, mitochondrial (539 aa).

The N-terminal 102 residues, 1–102 (MASRIINHSK…SSQMRSVRGF (102 aa)), are a transit peptide targeting the mitochondrion. Residues 102–122 (FSSSSDLPPHQEIGMPSLSPT) are disordered. Residues 111–187 (HQEIGMPSLS…QVGEVIAITV (77 aa)) form the Lipoyl-binding domain. Position 152 is an N6-lipoyllysine (Lys152). The disordered stretch occupies residues 196 to 244 (FKDYTPSSDTGPAAPEAKPAPSLPKEEKVEKPASAPEAKISKPSSAPSE). The region spanning 248–285 (FASPLARKLAEDNNVPLSSIKGTGPEGRIVKADVEDFL) is the Peripheral subunit-binding (PSBD) domain. Active-site residues include His512 and Asp516.

Belongs to the 2-oxoacid dehydrogenase family. The cofactor is (R)-lipoate.

It is found in the mitochondrion matrix. The enzyme catalyses N(6)-[(R)-dihydrolipoyl]-L-lysyl-[protein] + acetyl-CoA = N(6)-[(R)-S(8)-acetyldihydrolipoyl]-L-lysyl-[protein] + CoA. Functionally, the pyruvate dehydrogenase complex catalyzes the overall conversion of pyruvate to acetyl-CoA and CO(2). It contains multiple copies of three enzymatic components: pyruvate dehydrogenase (E1), dihydrolipoamide acetyltransferase (E2) and lipoamide dehydrogenase (E3). In Arabidopsis thaliana (Mouse-ear cress), this protein is Dihydrolipoyllysine-residue acetyltransferase component 2 of pyruvate dehydrogenase complex, mitochondrial.